We begin with the raw amino-acid sequence, 197 residues long: Protein SYM1 (197 aa).

4 helical membrane-spanning segments follow: residues 20-40 (AIMTGALFGIGDVSAQLLFPT), 55-75 (AVIYGSLIFSFIGDKWYKILN), 97-117 (VDQLAFAPLGLPFYFTCMSIM), and 137-157 (LLTNWAVWPLFQAINFSVVPL).

This sequence belongs to the peroxisomal membrane protein PXMP2/4 family.

The protein localises to the mitochondrion inner membrane. Its function is as follows. May be involved in cellular response to stress. Required to maintain mitochondrial DNA (mtDNA) integrity and stability. Required for ethanol metabolism and tolerance during heat shock. The polypeptide is Protein SYM1 (SYM1) (Saccharomyces cerevisiae (strain ATCC 204508 / S288c) (Baker's yeast)).